Here is a 1041-residue protein sequence, read N- to C-terminus: Serine-repeat antigen protein 6 (1041 aa).

Positions 1–34 (MIFFNFKLNRMICPIFFLYIINVLFTQYFIKCEG) are cleaved as a signal peptide. N-linked (GlcNAc...) asparagine glycosylation occurs at asparagine 84. A compositionally biased stretch (low complexity) spans 101 to 111 (KVVSSSESGKG). The disordered stretch occupies residues 101 to 173 (KVVSSSESGK…TESSSETLNK (73 aa)). Polar residues predominate over residues 114–149 (VSHTKVTSEGLSDTQPNVTQSVSSSTHTPGSLDSTM). N-linked (GlcNAc...) asparagine glycosylation is present at asparagine 130. The span at 150 to 168 (STEQHSSVSQSSLPTESSS) shows a compositional bias: low complexity. Asparagine 459 carries N-linked (GlcNAc...) asparagine glycosylation. Residues 500–577 (TLPSESPSES…GDTNYVYDFD (78 aa)) form a disordered region. Positions 502-515 (PSESPSESSSKSDS) are enriched in low complexity. Over residues 521 to 545 (NDKDKNEDKDDMSKNSKEEFKNDDK) the composition is skewed to basic and acidic residues. Residue asparagine 554 is glycosylated (N-linked (GlcNAc...) asparagine). Over residues 564 to 574 (NINNGDTNYVY) the composition is skewed to low complexity. Asparagine 583 carries N-linked (GlcNAc...) asparagine glycosylation. Cysteine 654 is an active-site residue. Residue asparagine 684 is glycosylated (N-linked (GlcNAc...) asparagine). Catalysis depends on residues histidine 820 and asparagine 845. N-linked (GlcNAc...) asparagine glycosylation is present at asparagine 984.

Belongs to the peptidase C1 family. Post-translationally, just prior to merozoite egress from host erythrocytes, proteolytically cleaved by SUB1 to generate the active 75kDa form.

Its subcellular location is the parasitophorous vacuole lumen. It is found in the parasitophorous vacuole membrane. Functionally, cysteine protease which plays an essential role in merozoite egress from host erythrocytes. May cleave host SPTB/beta spectrin and ANK1/ankyrin-1 which disrupts host erythrocyte actin cytoskeleton and leads to host erythrocyte cell membrane rupture. The polypeptide is Serine-repeat antigen protein 6 (Plasmodium falciparum).